The chain runs to 525 residues: C6 finger transcription factor fsqA (525 aa).

Residues 12–53 (CDRCRGQKLRCVGAGKPIPNSSSRLLRNEIPCDRCRRAKVEC) constitute a DNA-binding region (zn(2)-C6 fungal-type). Disordered regions lie at residues 80 to 142 (RSSS…LGDM), 204 to 260 (EWNS…EPAG), and 327 to 371 (RARS…ARSS). The span at 95 to 115 (PPNSLVTAASKPHPNSLSFNH) shows a compositional bias: polar residues. Positions 327-337 (RARSQWSSLPE) are enriched in polar residues.

It is found in the nucleus. In terms of biological role, transcription factor that regulates the expression of the gene cluster that mediates the biosynthesis of the isoquinoline alkaloids fumisoquin A, fumisoquin B and fumisoquin C; as well as small amounts of fumipyrrole as a shunt metabolite. The products of the cluster lead to a brown coloration and are important for growth and conidiation. The sequence is that of C6 finger transcription factor fsqA from Aspergillus fumigatus (strain ATCC MYA-4609 / CBS 101355 / FGSC A1100 / Af293) (Neosartorya fumigata).